A 255-amino-acid polypeptide reads, in one-letter code: 3-oxoacyl-[acyl-carrier-protein] reductase MabA (255 aa).

NADP(+)-binding positions include 33–35 (RGI), arginine 55, 69–70 (DV), glycine 98, tyrosine 161, lysine 165, isoleucine 194, and arginine 205. Residue tyrosine 161 is the Proton acceptor of the active site.

Belongs to the short-chain dehydrogenases/reductases (SDR) family. In terms of assembly, homotetramer.

Its subcellular location is the secreted. The protein resides in the cell wall. It carries out the reaction a (3R)-hydroxyacyl-[ACP] + NADP(+) = a 3-oxoacyl-[ACP] + NADPH + H(+). It participates in lipid metabolism; mycolic acid biosynthesis. In terms of biological role, part of the mycobacterial fatty acid elongation system FAS-II, which is involved in mycolic acid biosynthesis. Catalyzes the NADPH-dependent reduction of beta-ketoacyl derivatives, the second step of the FAS-II elongation cycle. In Mycobacterium avium, this protein is 3-oxoacyl-[acyl-carrier-protein] reductase MabA.